Reading from the N-terminus, the 209-residue chain is Small ribosomal subunit protein uS4 (209 aa).

The S4 RNA-binding domain occupies Arg-98–Gly-166.

The protein belongs to the universal ribosomal protein uS4 family. In terms of assembly, part of the 30S ribosomal subunit. Contacts protein S5. The interaction surface between S4 and S5 is involved in control of translational fidelity.

In terms of biological role, one of the primary rRNA binding proteins, it binds directly to 16S rRNA where it nucleates assembly of the body of the 30S subunit. With S5 and S12 plays an important role in translational accuracy. This Fervidobacterium nodosum (strain ATCC 35602 / DSM 5306 / Rt17-B1) protein is Small ribosomal subunit protein uS4.